The primary structure comprises 162 residues: Protein-export protein SecB (162 aa).

It belongs to the SecB family. In terms of assembly, homotetramer, a dimer of dimers. One homotetramer interacts with 1 SecA dimer.

Its subcellular location is the cytoplasm. Functionally, one of the proteins required for the normal export of preproteins out of the cell cytoplasm. It is a molecular chaperone that binds to a subset of precursor proteins, maintaining them in a translocation-competent state. It also specifically binds to its receptor SecA. This Pseudomonas syringae pv. syringae (strain B728a) protein is Protein-export protein SecB.